The chain runs to 118 residues: MARIAGINIPDQKHTVIALTAIFGIGRTRARAICAATAIAETAKIKELSEAQIDILREEVAKYIVEGDLRREISMNIKRLMDLGCYRGLRHRRSLPLRGQRTKTNARTRKGPRKPIRK.

Residues 94–118 (SLPLRGQRTKTNARTRKGPRKPIRK) are disordered.

Belongs to the universal ribosomal protein uS13 family. As to quaternary structure, part of the 30S ribosomal subunit. Forms a loose heterodimer with protein S19. Forms two bridges to the 50S subunit in the 70S ribosome.

Functionally, located at the top of the head of the 30S subunit, it contacts several helices of the 16S rRNA. In the 70S ribosome it contacts the 23S rRNA (bridge B1a) and protein L5 of the 50S subunit (bridge B1b), connecting the 2 subunits; these bridges are implicated in subunit movement. Contacts the tRNAs in the A and P-sites. This chain is Small ribosomal subunit protein uS13, found in Shewanella baltica (strain OS223).